Here is a 998-residue protein sequence, read N- to C-terminus: tRNA (34-2'-O)-methyltransferase regulator WDR6 (998 aa).

WD repeat units lie at residues 148-185 (LYYT…ESDP), 200-239 (AHNG…DWTT), 250-291 (GHSS…ILKR), 294-333 (QFGA…NRPK), 476-515 (NNRE…DDFQ), 527-566 (MGSN…STLR), 567-608 (VSQR…LLQL), 664-704 (RNCN…LSQR), 779-821 (ARLM…QLDL), 826-865 (DIQR…TYFQ), and 868-911 (LHVT…VEQK).

Belongs to the WD repeat WDR6 family. Interacts with Trm7-34.

The protein localises to the cytoplasm. Its function is as follows. Together with methyltransferase Trm7-34, methylates the 2'-O-ribose of nucleotides at position 34 of the anticodon loop of substrate tRNAs. This is tRNA (34-2'-O)-methyltransferase regulator WDR6 from Drosophila melanogaster (Fruit fly).